The sequence spans 476 residues: MADHSWDKTVEEAVNVLESRQILRSLRPICMSRQNEEEIVKSRANGGDGYEVFDGLCQWDRTSVEVSVSIPTFQKWLHDEPSNGEEIFSGDALAECRKGRFKKLLLFSGNDYLGLSSHPTISNAAANAVKEYGMGPKGSALICGYTTYHRLLESSLAQLKKKEDCLVCPTGFAANMAAMVAIGSVASLLAASGKPLKNEKVAIFSDALNHASIIDGVRLAERQGNVEVFVYRHCDMYHLNSLLSNCKMKRKVVVTDSLFSMDGDFAPMEELSQLRKKYGFLLVIDDAHGTFVCGENGGGVAEEFNCEADVDLCVGTLSKAAGCHGGFIACSKKWKQLIQSRGRSFIFSTAIPVPMAAAAYAAVVVARKEIWRRKAIWERVKEFKELSGVDISSPIISLVVGNQEKALKASRYLLKSGFHVMAIRPPTVPPNSCRLRVTLSAAHTTEDVKKLITALSSCLDFDNTATHIPSFLFPKL.

Arg-24 contributes to the substrate binding site. Residue 171–172 participates in pyridoxal 5'-phosphate binding; sequence GF. His-210 is a substrate binding site. Pyridoxal 5'-phosphate-binding positions include Ser-260, 285–288, and 316–319; these read DDAH and TLSK. Lys-319 carries the N6-(pyridoxal phosphate)lysine modification. Residue Thr-427 coordinates substrate. The Peroxisomal targeting signal PTS1 signature appears at 474-476; it reads PKL.

Belongs to the class-II pyridoxal-phosphate-dependent aminotransferase family. BioF subfamily. Monomer. It depends on pyridoxal 5'-phosphate as a cofactor.

Its subcellular location is the cytoplasm. The protein localises to the cytosol. It is found in the peroxisome. The catalysed reaction is 6-carboxyhexanoyl-[ACP] + L-alanine + H(+) = (8S)-8-amino-7-oxononanoate + holo-[ACP] + CO2. Its pathway is cofactor biosynthesis; biotin biosynthesis; 8-amino-7-oxononanoate from pimeloyl-CoA: step 1/1. In terms of biological role, catalyzes the decarboxylative condensation of pimeloyl-[acyl-carrier protein] and L-alanine to produce 8-amino-7-oxononanoate (AON), [acyl-carrier protein], and carbon dioxide. Required for the biosynthesis of D-biotin that prevents light-mediated cell death and modulates defense gene expression, probably by avoiding hydrogen peroxide H(2)O(2) accumulation. This is 8-amino-7-oxononanoate synthase from Arabidopsis thaliana (Mouse-ear cress).